The chain runs to 91 residues: Cell division protein ZapA (91 aa).

The stretch at 59–86 (TAVNIANEYLKLKEEYDRLAAKLRREKG) forms a coiled coil.

The protein belongs to the ZapA family. Type 2 subfamily. In terms of assembly, homodimer. Interacts with FtsZ.

The protein localises to the cytoplasm. Activator of cell division through the inhibition of FtsZ GTPase activity, therefore promoting FtsZ assembly into bundles of protofilaments necessary for the formation of the division Z ring. It is recruited early at mid-cell but it is not essential for cell division. This Geobacillus thermodenitrificans (strain NG80-2) protein is Cell division protein ZapA.